Consider the following 249-residue polypeptide: MPPKRNKKAEAPIAERDAGEELDPNAPVLYVEHCRSURVFRRRAEELHSALRERGLQQLQLQLNALGAPRRGAFELSLSAGGMGKQEQVALWSGLKRGPPRARKFPTVEEVYDQIVGILGDQQESKEQTNTQKSSKIDLPGSEAIASPKKSESTEEAQENKAPTSTSTSRKSKKEQKSEEEPTQVDSKEAKQSKELVKTKRQPKAQKKQAKASESQEEVAEDKPPSSQKRKRTTRSSTDEATAGAKRRR.

The interval 1–22 (MPPKRNKKAEAPIAERDAGEEL) is disordered. A compositionally biased stretch (basic and acidic residues) spans 8 to 19 (KAEAPIAERDAG). Residues 34-37 (CRSU) constitute a cross-link (cysteinyl-selenocysteine (Cys-Sec); redox-active). Residue Sec37 is a non-standard amino acid, selenocysteine. The disordered stretch occupies residues 122 to 249 (QQESKEQTNT…EATAGAKRRR (128 aa)). Residue Ser147 is modified to Phosphoserine. The span at 175-198 (EQKSEEEPTQVDSKEAKQSKELVK) shows a compositional bias: basic and acidic residues. A compositionally biased stretch (basic residues) spans 199–210 (TKRQPKAQKKQA).

Expressed in the developing salivary gland at late stages of embryogenesis. Also expressed in brain, neuroblast and wing disk.

The protein localises to the cytoplasm. The protein resides in the secreted. Its function is as follows. May be involved in a redox-related process. Required for survival and specifically for salivary gland morphogenesis. The sequence is that of Selenoprotein BthD (BthD) from Drosophila melanogaster (Fruit fly).